Consider the following 220-residue polypeptide: Large ribosomal subunit protein uL3 (220 aa).

Residues 145-169 (GPASHGSKFHRRPGSSGNRTWPGRV) are disordered.

The protein belongs to the universal ribosomal protein uL3 family. Part of the 50S ribosomal subunit. Forms a cluster with proteins L14 and L19.

Its function is as follows. One of the primary rRNA binding proteins, it binds directly near the 3'-end of the 23S rRNA, where it nucleates assembly of the 50S subunit. The sequence is that of Large ribosomal subunit protein uL3 from Bdellovibrio bacteriovorus (strain ATCC 15356 / DSM 50701 / NCIMB 9529 / HD100).